Reading from the N-terminus, the 219-residue chain is Mediator of RNA polymerase II transcription subunit 7 (219 aa).

Positions 173-203 (LPDPAESDRLNSTVEPMDTGDDGEAGKSRGE) are disordered.

It belongs to the Mediator complex subunit 7 family. As to quaternary structure, component of the Mediator complex.

The protein resides in the nucleus. Component of the Mediator complex, a coactivator involved in the regulated transcription of nearly all RNA polymerase II-dependent genes. Mediator functions as a bridge to convey information from gene-specific regulatory proteins to the basal RNA polymerase II transcription machinery. Mediator is recruited to promoters by direct interactions with regulatory proteins and serves as a scaffold for the assembly of a functional preinitiation complex with RNA polymerase II and the general transcription factors. In Aedes aegypti (Yellowfever mosquito), this protein is Mediator of RNA polymerase II transcription subunit 7 (MED7).